Here is a 124-residue protein sequence, read N- to C-terminus: Small ribosomal subunit protein uS12 (124 aa).

The disordered stretch occupies residues 1–32; the sequence is MPTISQLIRHGRQKQKKRTKSPALKSSPQRRG. Positions 9–20 are enriched in basic residues; the sequence is RHGRQKQKKRTK. Asp89 carries the post-translational modification 3-methylthioaspartic acid.

It belongs to the universal ribosomal protein uS12 family. In terms of assembly, part of the 30S ribosomal subunit. Contacts proteins S8 and S17. May interact with IF1 in the 30S initiation complex.

Its function is as follows. With S4 and S5 plays an important role in translational accuracy. In terms of biological role, interacts with and stabilizes bases of the 16S rRNA that are involved in tRNA selection in the A site and with the mRNA backbone. Located at the interface of the 30S and 50S subunits, it traverses the body of the 30S subunit contacting proteins on the other side and probably holding the rRNA structure together. The combined cluster of proteins S8, S12 and S17 appears to hold together the shoulder and platform of the 30S subunit. The sequence is that of Small ribosomal subunit protein uS12 from Leptospira borgpetersenii serovar Hardjo-bovis (strain JB197).